The chain runs to 113 residues: Large ribosomal subunit protein bL19 (113 aa).

The protein belongs to the bacterial ribosomal protein bL19 family.

Its function is as follows. This protein is located at the 30S-50S ribosomal subunit interface and may play a role in the structure and function of the aminoacyl-tRNA binding site. This is Large ribosomal subunit protein bL19 from Mycobacteroides abscessus (strain ATCC 19977 / DSM 44196 / CCUG 20993 / CIP 104536 / JCM 13569 / NCTC 13031 / TMC 1543 / L948) (Mycobacterium abscessus).